Consider the following 200-residue polypeptide: MSKFLQQKPIILASSSTIRHKLMKSLGLDFLVVPSNCNEEEIKTRHNSDELVKLGITLAKIKALDVSQHYPEHYIIAADQLCIADKRVFNKPLNHQTAVSHLRELSGKQHQQIACLCIVKESKILWQYHETATLTLHHLSEKTIEAYLQAEKPYQSCGAYQYEGLGKWLFKEVQGSEDTILGLPLMPLVNALVNLKVVGI.

Asp79 acts as the Proton acceptor in catalysis.

It belongs to the Maf family. A divalent metal cation is required as a cofactor.

It localises to the cytoplasm. It catalyses the reaction a ribonucleoside 5'-triphosphate + H2O = a ribonucleoside 5'-phosphate + diphosphate + H(+). The enzyme catalyses a 2'-deoxyribonucleoside 5'-triphosphate + H2O = a 2'-deoxyribonucleoside 5'-phosphate + diphosphate + H(+). Nucleoside triphosphate pyrophosphatase. May have a dual role in cell division arrest and in preventing the incorporation of modified nucleotides into cellular nucleic acids. The protein is Nucleoside triphosphate pyrophosphatase of Legionella pneumophila (strain Lens).